The following is a 235-amino-acid chain: Claudin-15 (235 aa).

Met-1 is a topological domain (cytoplasmic). Residues 2 to 24 traverse the membrane as a helical segment; sequence LVAVEIFGFFLTAVGLLMLGVTL. Over 25–74 the chain is Extracellular; that stretch reads AHSSWRVSTVHGNVITTNTIFENLWYSCATDSMGVHNCWEFPSMLALSGY. A disulfide bond links Cys-52 and Cys-62. The chain crosses the membrane as a helical span at residues 75–99; that stretch reads IQACRALMITAILLGFLGLFLGMVG. Over 100–115 the chain is Cytoplasmic; that stretch reads LRCTNIGGLELSRKTK. Phosphoserine is present on Ser-111. A helical transmembrane segment spans residues 116-140; sequence LAATAGALHILAGICGMVAVSWYAF. Residues 141 to 159 lie on the Extracellular side of the membrane; it reads NITRDFFNPLYAGTKYELG. An important for the formation of tight-junction strand-like structures region spans residues 146 to 147; that stretch reads FF. The chain crosses the membrane as a helical span at residues 160–182; it reads PALYLGWSACLLAILGGICLFSN. The Cytoplasmic portion of the chain corresponds to 183 to 235; sequence CCCSRDRDPATGVQLPYKAPVIPAASLAARLPAAASDEEGDSSFGKYGKNAYV. Residues Ser-218 and Ser-225 each carry the phosphoserine modification.

The protein belongs to the claudin family. Can form homo- and heteropolymeric tight junction strands. In terms of processing, palmitoylated.

It localises to the cell junction. The protein localises to the tight junction. The protein resides in the cell membrane. It carries out the reaction Na(+)(in) = Na(+)(out). The enzyme catalyses K(+)(in) = K(+)(out). The catalysed reaction is Cs(+)(in) = Cs(+)(out). It catalyses the reaction Rb(+)(in) = Rb(+)(out). It carries out the reaction Li(+)(in) = Li(+)(out). The enzyme catalyses NH4(+)(in) = NH4(+)(out). The catalysed reaction is methylamine(out) = methylamine(in). It catalyses the reaction H2O(in) = H2O(out). Functionally, forms paracellular channels: polymerizes in tight junction strands with cation- and water-selective channels through the strands, conveying epithelial permeability in a process known as paracellular tight junction permeability. In intestinal epithelium, allows for sodium and water fluxes from the peritoneal side to the lumen of the intestine to regulate nutrient absorption and intestinal morphogenesis. In Bos taurus (Bovine), this protein is Claudin-15 (CLDN15).